A 340-amino-acid polypeptide reads, in one-letter code: Beta-D-galactofuranosidase xynD (340 aa).

Positions 1 to 24 (MKHHNYYPSTCLSILPFLLPLTMS) are cleaved as a signal peptide. Asp-51 (proton acceptor) is an active-site residue. 2 N-linked (GlcNAc...) asparagine glycosylation sites follow: Asn-96 and Asn-165. The Proton donor role is filled by Glu-222. N-linked (GlcNAc...) asparagine glycans are attached at residues Asn-302 and Asn-328.

This sequence belongs to the glycosyl hydrolase 43 family.

The protein localises to the secreted. It participates in glycan degradation. In terms of biological role, glycoside hydrolase family 43 beta-D-galactofuranosidase involved in the degradation of beta-galactofuranoside (Galf)-containing glycans such as galactomannan or O-glycans. Is not active on beta-1,5- or beta-1,6-linked beta-D-galactofuranose (Galf) residues. The protein is Beta-D-galactofuranosidase xynD of Aspergillus niger (strain ATCC MYA-4892 / CBS 513.88 / FGSC A1513).